We begin with the raw amino-acid sequence, 610 residues long: Sulfite reductase [NADPH] flavoprotein alpha-component (610 aa).

The region spanning 68-206 is the Flavodoxin-like domain; the sequence is IIVISASQTG…EVDKWKEKVV (139 aa). FMN contacts are provided by residues 74-79, 121-124, and 157-166; these read SQTGNA, STHG, and LGDRSYEYFA. Positions 243-459 constitute an FAD-binding FR-type domain; the sequence is EFPLIAYLLN…VESNDNFRLP (217 aa). FAD contacts are provided by residues Thr331, Ser365, 397-400, 415-417, Tyr421, and 430-433; these read RFYS, TVS, and GGAS. Residues 530–531, 536–540, and Asp572 contribute to the NADP(+) site; these read SR and KVYVQ. An FAD-binding site is contributed by Tyr610.

It belongs to the NADPH-dependent sulphite reductase flavoprotein subunit CysJ family. The protein in the N-terminal section; belongs to the flavodoxin family. This sequence in the C-terminal section; belongs to the flavoprotein pyridine nucleotide cytochrome reductase family. As to quaternary structure, alpha(8)-beta(8). The alpha component is a flavoprotein, the beta component is a hemoprotein. It depends on FAD as a cofactor. FMN is required as a cofactor.

It carries out the reaction hydrogen sulfide + 3 NADP(+) + 3 H2O = sulfite + 3 NADPH + 4 H(+). The protein operates within sulfur metabolism; hydrogen sulfide biosynthesis; hydrogen sulfide from sulfite (NADPH route): step 1/1. Functionally, component of the sulfite reductase complex that catalyzes the 6-electron reduction of sulfite to sulfide. This is one of several activities required for the biosynthesis of L-cysteine from sulfate. The flavoprotein component catalyzes the electron flow from NADPH -&gt; FAD -&gt; FMN to the hemoprotein component. The chain is Sulfite reductase [NADPH] flavoprotein alpha-component from Blochmanniella floridana.